The chain runs to 365 residues: tRNA-specific 2-thiouridylase MnmA (365 aa).

ATP contacts are provided by residues 9 to 16 (GLSGGVDS) and Met35. The tract at residues 95 to 97 (NPD) is interaction with target base in tRNA. Catalysis depends on Cys100, which acts as the Nucleophile. A disulfide bond links Cys100 and Cys196. Residue Gly124 participates in ATP binding. The tract at residues 146-148 (KDQ) is interaction with tRNA. The active-site Cysteine persulfide intermediate is the Cys196. The interaction with tRNA stretch occupies residues 315–316 (RY).

This sequence belongs to the MnmA/TRMU family.

The protein resides in the cytoplasm. The catalysed reaction is S-sulfanyl-L-cysteinyl-[protein] + uridine(34) in tRNA + AH2 + ATP = 2-thiouridine(34) in tRNA + L-cysteinyl-[protein] + A + AMP + diphosphate + H(+). Its function is as follows. Catalyzes the 2-thiolation of uridine at the wobble position (U34) of tRNA, leading to the formation of s(2)U34. The chain is tRNA-specific 2-thiouridylase MnmA from Dechloromonas aromatica (strain RCB).